The following is a 235-amino-acid chain: MIIFPAIDLKDGQAVRLTKGLMDSAKVYSNEPYELAKRFEEMGAEWLHIVDLNGAFAGEPKNIEQIEKIRKNTNLKIQLGGGIRDEDTIKRYLDLGINRLILGSIAAKNPKLVSELAEKYPIAVGIDAKDGFVAIDGWDKTEGILAKDLAEKYKDSKIECIIATDISKDGTLTGLNIDFILEIQNASQKPVIASGGVASEEDIKKVKENNIYGVIIGKAFYEGKIDLQNVLRENA.

Asp8 serves as the catalytic Proton acceptor. The active-site Proton donor is the Asp127.

The protein belongs to the HisA/HisF family.

It localises to the cytoplasm. It catalyses the reaction 1-(5-phospho-beta-D-ribosyl)-5-[(5-phospho-beta-D-ribosylamino)methylideneamino]imidazole-4-carboxamide = 5-[(5-phospho-1-deoxy-D-ribulos-1-ylimino)methylamino]-1-(5-phospho-beta-D-ribosyl)imidazole-4-carboxamide. It functions in the pathway amino-acid biosynthesis; L-histidine biosynthesis; L-histidine from 5-phospho-alpha-D-ribose 1-diphosphate: step 4/9. The polypeptide is 1-(5-phosphoribosyl)-5-[(5-phosphoribosylamino)methylideneamino] imidazole-4-carboxamide isomerase (Nautilia profundicola (strain ATCC BAA-1463 / DSM 18972 / AmH)).